The following is a 48-amino-acid chain: uncharacterized protein (48 aa).

The disordered stretch occupies residues 1–30 (MLGRTKLGNRNAQANNNAKKKNGFQTHFDS).

This is an uncharacterized protein from Bacillus subtilis (strain 168).